The sequence spans 268 residues: Shikimate dehydrogenase (NADP(+)) (268 aa).

Shikimate-binding positions include 13–15 and T60; that span reads SLS. The Proton acceptor role is filled by K64. E76 serves as a coordination point for NADP(+). 2 residues coordinate shikimate: N85 and D100. Residues 124-128, 148-153, and I209 contribute to the NADP(+) site; these read GAGGA and NRTMAR. Position 211 (Y211) interacts with shikimate. Residue G232 participates in NADP(+) binding.

Belongs to the shikimate dehydrogenase family. In terms of assembly, homodimer.

The catalysed reaction is shikimate + NADP(+) = 3-dehydroshikimate + NADPH + H(+). The protein operates within metabolic intermediate biosynthesis; chorismate biosynthesis; chorismate from D-erythrose 4-phosphate and phosphoenolpyruvate: step 4/7. Functionally, involved in the biosynthesis of the chorismate, which leads to the biosynthesis of aromatic amino acids. Catalyzes the reversible NADPH linked reduction of 3-dehydroshikimate (DHSA) to yield shikimate (SA). The protein is Shikimate dehydrogenase (NADP(+)) of Staphylococcus aureus (strain JH1).